The sequence spans 225 residues: Heptaprenylglyceryl phosphate synthase (225 aa).

Residue lysine 6 participates in sn-glycerol 1-phosphate binding. Residues aspartate 8 and threonine 34 each contribute to the Mg(2+) site. Sn-glycerol 1-phosphate-binding positions include 153-158 (YIEYSG), glycine 183, and 203-204 (GN).

It belongs to the GGGP/HepGP synthase family. Group I subfamily. In terms of assembly, homodimer. The cofactor is Mg(2+).

It catalyses the reaction sn-glycerol 1-phosphate + all-trans-heptaprenyl diphosphate = 3-heptaprenyl-sn-glycero-1-phosphate + diphosphate. It participates in membrane lipid metabolism; glycerophospholipid metabolism. Its function is as follows. Prenyltransferase that catalyzes in vivo the transfer of the heptaprenyl moiety of heptaprenyl pyrophosphate (HepPP; 35 carbon atoms) to the C3 hydroxyl of sn-glycerol-1-phosphate (G1P), producing heptaprenylglyceryl phosphate (HepGP). This reaction is an ether-bond-formation step in the biosynthesis of archaea-type G1P-based membrane lipids found in Bacillales. This Listeria welshimeri serovar 6b (strain ATCC 35897 / DSM 20650 / CCUG 15529 / CIP 8149 / NCTC 11857 / SLCC 5334 / V8) protein is Heptaprenylglyceryl phosphate synthase.